Consider the following 345-residue polypeptide: MDLSLLKALSEADAIASSEQEVRQILLEEADRLQKEVRFDGLGSVLIRLNESTGPKVMICAHMDEVGFMVRSISREGAIDVLPVGNVRMAARQLQPVRITTREECKIPGLLDGDRQGNDVSAMRVDIGARSYDEVMQAGIRPGDRVTFDTTFQVLPHQRVMGKAFDDRLGCYLLVTLLRELHDAELPAEVWLVASSSEEVGLRGGQTATRAVSPDVAIVLDTACWAKNFDYGAANHRQIGNGPMLVLSDKSLIAPPKLTAWVETVAAEIGVPLQADMFSNGGTDGGAVHLTGTGVPTVVMGPATRHGHCAASIADCRDILQMQQLLSALIQRLTRETVVQLTDFR.

Histidine 62 and aspartate 166 together coordinate a divalent metal cation. Catalysis depends on glutamate 198, which acts as the Proton acceptor. Glutamate 199, aspartate 221, and histidine 308 together coordinate a divalent metal cation.

The protein belongs to the peptidase M42 family. The cofactor is Co(2+). It depends on Ni(2+) as a cofactor. Requires Mn(2+) as cofactor. Cu(2+) is required as a cofactor.

Functionally, has a broad aminopeptidase activity on non-blocked peptides by progressively cleaving amino acids off the peptide substrate. Aminopeptidase activity stops at the residue before the first proline in the peptide. Cannot cleave when proline is the first N-terminal residue. This chain is Aminopeptidase YpdE (ypdE), found in Escherichia coli (strain K12).